The following is a 333-amino-acid chain: GTPase Obg (333 aa).

Residues Gly-4–Leu-162 form the Obg domain. The OBG-type G domain occupies Ala-163 to Asn-332. Residues Gly-169 to Ser-176, Phe-194 to Lys-198, Asp-216 to Gly-219, Ser-283 to Asp-286, and Ser-313 to Val-315 contribute to the GTP site. Positions 176 and 196 each coordinate Mg(2+).

It belongs to the TRAFAC class OBG-HflX-like GTPase superfamily. OBG GTPase family. As to quaternary structure, monomer. Requires Mg(2+) as cofactor.

Its subcellular location is the cytoplasm. Its function is as follows. An essential GTPase which binds GTP, GDP and possibly (p)ppGpp with moderate affinity, with high nucleotide exchange rates and a fairly low GTP hydrolysis rate. Plays a role in control of the cell cycle, stress response, ribosome biogenesis and in those bacteria that undergo differentiation, in morphogenesis control. This Flavobacterium johnsoniae (strain ATCC 17061 / DSM 2064 / JCM 8514 / BCRC 14874 / CCUG 350202 / NBRC 14942 / NCIMB 11054 / UW101) (Cytophaga johnsonae) protein is GTPase Obg.